A 745-amino-acid chain; its full sequence is MMTQAQTYFYDGSDVALLNGQYTDVFSLLGMHCINEGKALVVRCFLRNAQKVDVISLKDGRKVASLERVNEAGLFAGTLGRRVKPFLYALRVVYPLCELDIIDPYQFGSLLDSQDLYLFGEGGSEQAYRFLGANWRQVDSVEGVHFCVWAPNAKRVSVVGDFNHWDDTRHVMRQHMANGLWEIFLPDVAEGAHYKFDLVYQNGERHAKSDPMATQMECAPNNASIVPKKHQHPWADTQWMDKRATTAWHRAAMSIYEVQLGSWRRKGEFGEQYFDYQDLIEQLIPYVKEQGFTHIELMPVSEYPFDGSWGYQPVGLYAPTHRFGDANGLKAFIDACHQAEIGVLLDWVAAHFPKDPHGLVRFDGTCLYEHEDPRKGTHPDWDTLIYNYDRGEVRSFLLSNACYWLREFHLDGLRLDAVSSMLYLDYSREPGQWLPNAYGGRENLEAIHFLQMLNQRLYQAFPGICMIAEESTAFAGVTKPTDCGGLGFGFKWNMGWMNDSLSYLGRDPIYRQYHHNQLTFSLMYAYSEQFMLSISHDEVVHGKGSLLHKIPGDDWQKFATLRAYYGFMWGHPGKKLLFMGSEFAQRDEWNHNHSLDWHLLAFEPHQGVQRWLRDLNQLYRQFPALSVLDYESQGFRWLDCDNGRDSIFSFVRYGEGSDVPLVFVVNMTPTLHQGFRIGLPQGGDFCEYLNSDSHLYGGSNQGNAGKVIAEDLPWQGMASSALITVPPLGCLILGPATDAPRDTSL.

D416 acts as the Nucleophile in catalysis. Catalysis depends on E469, which acts as the Proton donor.

It belongs to the glycosyl hydrolase 13 family. GlgB subfamily. In terms of assembly, monomer.

The enzyme catalyses Transfers a segment of a (1-&gt;4)-alpha-D-glucan chain to a primary hydroxy group in a similar glucan chain.. Its pathway is glycan biosynthesis; glycogen biosynthesis. Functionally, catalyzes the formation of the alpha-1,6-glucosidic linkages in glycogen by scission of a 1,4-alpha-linked oligosaccharide from growing alpha-1,4-glucan chains and the subsequent attachment of the oligosaccharide to the alpha-1,6 position. The chain is 1,4-alpha-glucan branching enzyme GlgB from Shewanella sp. (strain MR-7).